A 349-amino-acid chain; its full sequence is MGGVSFLSTVPSFTNTTNHQHLTTLSSSSHRSAVIRCSKIEPQVSGESLAFHRRDVLKLAGTAVGMELIGNGFINNVGDAKAADLNQRRQRSEFQSKIKILLSTTIKAKPELVPSLLKLALNDAMTYDKATKSGGANGSIRFSSELSRAENEGLSDGLSLIEEVKKEIDSISKGGPISYADIIQLAGQSAVKFTYLASAIRKCGGNEEKGNLLYTAYGSAGQWGLFDRNFGRSDATEADPEGRVPQWGKATVQEMKDKFIAVGLGPRQLAVMSAFLGPDQAATEQLLATDPQVAPWVQKYQRSRETVSQTDYEVDLITAFTKLSCLGQQINFEAYTYPVERINLSKLKL.

Ser155 is modified (phosphoserine).

The protein belongs to the peroxidase family.

It localises to the plastid. It is found in the chloroplast thylakoid lumen. This is Thylakoid lumenal 29 kDa protein, chloroplastic (TL29) from Arabidopsis thaliana (Mouse-ear cress).